We begin with the raw amino-acid sequence, 329 residues long: MVKAKSWTLKKHFQGKPTQSDFELKTVELPPLKNGEVLLEALFLSVDPYMRIASKRLKEGAVMMGQQVARVVESKNSAFPAGSIVLAQSGWTTHFISDGKGLEKLLTEWPDKLPLSLALGTIGMPGLTAYFGLLEVCGVKGGETVLVSAAAGAVGSVVGQIAKLKGCKVVGAAGSDEKIAYLKQIGFDAAFNYKTVNSLEEALKKASPDGYDCYFDNVGGEFLNTVLSQMKDFGKIAICGAISVYNRMDQLPPGPSPESIIYKQLRIEGFIVYRWQGDVREKALRDLMKWVLEGKIQYHEHVTKGFENMPAAFIEMLNGANLGKAVVTA.

Thr-18 bears the Phosphothreonine mark. A Phosphoserine modification is found at Ser-20. Residues 152–155, Lys-178, Tyr-193, Asn-217, 239–245, 270–272, and Asn-321 contribute to the NADP(+) site; these read GAVG, CGAISVY, and FIV. Residue Lys-178 is modified to N6-(2-hydroxyisobutyryl)lysine; alternate. N6-acetyllysine; alternate is present on Lys-178.

This sequence belongs to the NADP-dependent oxidoreductase L4BD family. As to quaternary structure, monomer or homodimer. Detected in small intestine, kidney, liver, spleen and stomach (at protein level). Detected in small intestine, kidney and liver.

It is found in the cytoplasm. It catalyses the reaction 13,14-dihydro-15-oxo-prostaglandin E1 + NADP(+) = 15-oxoprostaglandin E1 + NADPH + H(+). The catalysed reaction is 13,14-dihydro-15-oxo-prostaglandin E2 + NAD(+) = 15-oxoprostaglandin E2 + NADH + H(+). The enzyme catalyses 13,14-dihydro-15-oxo-prostaglandin F1alpha + NADP(+) = 15-oxoprostaglandin F1alpha + NADPH + H(+). It carries out the reaction 13,14-dihydro-15-oxo-PGF2alpha + NADP(+) = 15-oxoprostaglandin F2alpha + NADPH + H(+). It catalyses the reaction leukotriene B4 + NADP(+) = 12-oxo-leukotriene B4 + NADPH + H(+). The catalysed reaction is 20-hydroxy-leukotriene B4 + NADP(+) = 12-oxo-20-hydroxy-leukotriene B4 + NADPH + H(+). The enzyme catalyses 6-trans-leukotriene B4 + NADP(+) = 12-oxo-(5S)-hydroxy-(6E,8E,10E,14Z)-eicosatetraenoate + NADPH + H(+). It carries out the reaction (5S,12S)-dihydroxy-(6E,10E,12E,14Z)-eicosatetraenoate + NADP(+) = 12-oxo-(5S)-hydroxy-(6E,8E,10E,14Z)-eicosatetraenoate + NADPH + H(+). It catalyses the reaction an n-alkanal + NADP(+) = an alk-2-enal + NADPH + H(+). The catalysed reaction is hexanal + NADP(+) = (E)-hex-2-enal + NADPH + H(+). The enzyme catalyses octanal + NADP(+) = (2E)-octenal + NADPH + H(+). It carries out the reaction decanal + NADP(+) = (2E)-decenal + NADPH + H(+). It catalyses the reaction dodecanal + NADP(+) = (2E)-dodecenal + NADPH + H(+). The catalysed reaction is 4-hydroxynonanal + NADP(+) = (E)-4-hydroxynon-2-enal + NADPH + H(+). The enzyme catalyses pentan-2-one + NADP(+) = (E)-pent-3-en-2-one + NADPH + H(+). It carries out the reaction nonan-2-one + NADP(+) = (3E)-nonen-2-one + NADPH + H(+). Functionally, NAD(P)H-dependent oxidoreductase involved in metabolic inactivation of pro- and anti-inflammatory eicosanoids: prostaglandins (PG), leukotrienes (LT) and lipoxins (LX). Catalyzes with high efficiency the reduction of the 13,14 double bond of 15-oxoPGs, including 15-oxo-PGE1, 15-oxo-PGE2, 15-oxo-PGF1-alpha and 15-oxo-PGF2-alpha. Catalyzes with lower efficiency the oxidation of the hydroxyl group at C12 of LTB4 and its derivatives, converting them into biologically less active 12-oxo-LTB4 metabolites. Reduces 15-oxo-LXA4 to 13,14 dihydro-15-oxo-LXA4, enhancing neutrophil recruitment at the inflammatory site. Plays a role in metabolic detoxification of alkenals and ketones. Reduces alpha,beta-unsaturated alkenals and ketones, particularly those with medium-chain length, showing highest affinity toward (2E)-decenal and (3E)-3-nonen-2-one. May inactivate 4-hydroxy-2-nonenal, a cytotoxic lipid constituent of oxidized low-density lipoprotein particles. This is Prostaglandin reductase 1 (Ptgr1) from Cavia porcellus (Guinea pig).